A 133-amino-acid chain; its full sequence is ATP synthase epsilon chain (133 aa).

Belongs to the ATPase epsilon chain family. In terms of assembly, F-type ATPases have 2 components, CF(1) - the catalytic core - and CF(0) - the membrane proton channel. CF(1) has five subunits: alpha(3), beta(3), gamma(1), delta(1), epsilon(1). CF(0) has three main subunits: a, b and c.

It is found in the cell membrane. Its function is as follows. Produces ATP from ADP in the presence of a proton gradient across the membrane. The chain is ATP synthase epsilon chain from Clostridium botulinum (strain ATCC 19397 / Type A).